A 145-amino-acid polypeptide reads, in one-letter code: Transcriptional regulator MraZ (145 aa).

SpoVT-AbrB domains lie at 5 to 47 (EHQH…PLPE) and 76 to 119 (AVEC…AKDQ).

The protein belongs to the MraZ family. As to quaternary structure, forms oligomers.

The protein localises to the cytoplasm. It is found in the nucleoid. This chain is Transcriptional regulator MraZ, found in Pelotomaculum thermopropionicum (strain DSM 13744 / JCM 10971 / SI).